A 532-amino-acid chain; its full sequence is uncharacterized protein (532 aa).

The next 13 helical transmembrane spans lie at 13-33 (MSLL…QTLL), 53-73 (WLTT…AFLI), 80-100 (SLFL…GIAP), 111-131 (IQAV…LLIF), 142-162 (IFGL…GWII), 169-189 (IMFY…FFIF), 203-223 (LGAI…SEAG), 231-251 (IVLS…VQQL), 273-293 (VINI…PIYL), 306-326 (LLLL…GILF), 334-354 (LAII…QLTI), 361-381 (IMLI…PVMT), and 483-503 (INDA…LSIF).

This sequence belongs to the major facilitator superfamily. EmrB family.

It localises to the cell membrane. This is an uncharacterized protein from Bacillus subtilis (strain 168).